A 106-amino-acid polypeptide reads, in one-letter code: Nucleoid-associated protein Nham_0463 (106 aa).

The protein belongs to the YbaB/EbfC family. In terms of assembly, homodimer.

Its subcellular location is the cytoplasm. The protein resides in the nucleoid. Binds to DNA and alters its conformation. May be involved in regulation of gene expression, nucleoid organization and DNA protection. This chain is Nucleoid-associated protein Nham_0463, found in Nitrobacter hamburgensis (strain DSM 10229 / NCIMB 13809 / X14).